We begin with the raw amino-acid sequence, 273 residues long: Urease accessory protein UreD (273 aa).

This sequence belongs to the UreD family. UreD, UreF and UreG form a complex that acts as a GTP-hydrolysis-dependent molecular chaperone, activating the urease apoprotein by helping to assemble the nickel containing metallocenter of UreC. The UreE protein probably delivers the nickel.

Its subcellular location is the cytoplasm. Required for maturation of urease via the functional incorporation of the urease nickel metallocenter. In Rhizobium leguminosarum bv. viciae, this protein is Urease accessory protein UreD.